The primary structure comprises 324 residues: tRNA dimethylallyltransferase (324 aa).

An ATP-binding site is contributed by Gly17–Thr24. Thr19–Thr24 contributes to the substrate binding site. 4 interaction with substrate tRNA regions span residues Asp42–Leu45, Gln166–Arg170, Arg251–Arg256, and Lys284–Arg291.

Belongs to the IPP transferase family. Monomer. Mg(2+) serves as cofactor.

It carries out the reaction adenosine(37) in tRNA + dimethylallyl diphosphate = N(6)-dimethylallyladenosine(37) in tRNA + diphosphate. Functionally, catalyzes the transfer of a dimethylallyl group onto the adenine at position 37 in tRNAs that read codons beginning with uridine, leading to the formation of N6-(dimethylallyl)adenosine (i(6)A). This Burkholderia lata (strain ATCC 17760 / DSM 23089 / LMG 22485 / NCIMB 9086 / R18194 / 383) protein is tRNA dimethylallyltransferase.